Consider the following 20-residue polypeptide: U27-ctenitoxin-Pn1a (20 aa).

Residues 1–20 are disordered; that stretch reads LAKRADICQPGKTSQRACET. Residues 11-20 are compositionally biased toward polar residues; it reads GKTSQRACET.

Contains 4 disulfide bonds. As to expression, expressed by the venom gland.

The protein localises to the secreted. Functionally, has a vascular smooth muscle contracting activity. Causes short-lived contractions of both arterial and venous rabbit vessels. This is U27-ctenitoxin-Pn1a from Phoneutria nigriventer (Brazilian armed spider).